A 598-amino-acid chain; its full sequence is Kinesin-like protein klp-3 (598 aa).

Coiled-coil stretches lie at residues 19–66 (EVEL…FIQG) and 89–118 (GNLSEENLRLKNALSQMQKVARVNELLETD). Residues 133-155 (ALSRDSSCSVPRSVSPQPTGDVI) are disordered. Residues 136-150 (RDSSCSVPRSVSPQP) show a composition bias toward polar residues. Positions 170-248 (HWKKLQRCAE…LVELNGNIRV (79 aa)) form a coiled coil. A Kinesin motor domain is found at 245–565 (NIRVFYRIRP…VNFAEKIGQV (321 aa)). 328–335 (GHTGSGKT) is a binding site for ATP. The disordered stretch occupies residues 569 to 598 (SGTMKREPTRRSMTGISSGQRREIPASPRK).

The protein belongs to the TRAFAC class myosin-kinesin ATPase superfamily. Kinesin family.

The protein localises to the cytoplasm. It is found in the cytoskeleton. The chain is Kinesin-like protein klp-3 (klp-3) from Caenorhabditis elegans.